The primary structure comprises 131 residues: Profilin-1 (131 aa).

The protein belongs to the profilin family. As to quaternary structure, occurs in many kinds of cells as a complex with monomeric actin in a 1:1 ratio.

The protein localises to the cytoplasm. Its subcellular location is the cytoskeleton. Its function is as follows. Binds to actin and affects the structure of the cytoskeleton. At high concentrations, profilin prevents the polymerization of actin, whereas it enhances it at low concentrations. By binding to PIP2, it inhibits the formation of IP3 and DG. The protein is Profilin-1 of Lilium longiflorum (Trumpet lily).